A 253-amino-acid chain; its full sequence is Sulfate transporter CysZ (253 aa).

A run of 4 helical transmembrane segments spans residues 31 to 51 (FVILPLLVNILLMGGAFWWLF), 75 to 95 (LLWPLAVISVLLVFGYFFSTI), 151 to 171 (IVLLILYLIPGIGQTVTPVLW), and 222 to 242 (IPLLNLFIMPVAVCGATAMWV).

The protein belongs to the CysZ family.

It localises to the cell inner membrane. High affinity, high specificity proton-dependent sulfate transporter, which mediates sulfate uptake. Provides the sulfur source for the cysteine synthesis pathway. The protein is Sulfate transporter CysZ of Escherichia coli O8 (strain IAI1).